We begin with the raw amino-acid sequence, 184 residues long: Photosystem I assembly protein Ycf4 (184 aa).

Transmembrane regions (helical) follow at residues 22-42 (VCWA…GTSS) and 57-77 (IIFF…LFIS).

It belongs to the Ycf4 family.

The protein localises to the plastid. Its subcellular location is the chloroplast thylakoid membrane. Its function is as follows. Seems to be required for the assembly of the photosystem I complex. This Morus indica (Mulberry) protein is Photosystem I assembly protein Ycf4.